We begin with the raw amino-acid sequence, 68 residues long: MAVPQNRVTRSRRNMRRSHDALVAGNPNECSNCGELKRPHHVCPSCGHYADREVVAQANEVDLDEDAA.

A disordered region spans residues 1 to 24 (MAVPQNRVTRSRRNMRRSHDALVA).

Belongs to the bacterial ribosomal protein bL32 family.

This Paracoccus denitrificans (strain Pd 1222) protein is Large ribosomal subunit protein bL32.